The primary structure comprises 607 residues: CUB and zona pellucida-like domain-containing protein 1 (607 aa).

The N-terminal stretch at 1-19 (MEVTGRLFIWAILAVSCRA) is a signal peptide. The Lumenal segment spans residues 20–568 (QLNSTAAEGR…AEISKQPLSH (549 aa)). Asn22 is a glycosylation site (N-linked (GlcNAc...) asparagine). Cys32 and Cys58 are oxidised to a cystine. 2 consecutive CUB domains span residues 32 to 146 (CTAS…YFFS) and 154 to 265 (CGGY…YAST). The N-linked (GlcNAc...) asparagine glycan is linked to Asn67. 2 disulfide bridges follow: Cys85–Cys107 and Cys154–Cys180. N-linked (GlcNAc...) asparagine glycosylation is present at Asn195. Cys207 and Cys229 are disulfide-bonded. Positions 276–519 (SCASDKMRVI…SRCNQGCVSR (244 aa)) constitute a ZP domain. Asn419 carries N-linked (GlcNAc...) asparagine glycosylation. The cysteines at positions 442 and 498 are disulfide-linked. The helical transmembrane segment at 569–589 (LHLFSFMVLALNVVIVVTATV) threads the bilayer. Residues 590-607 (RHFLNRWKDHGYQKLQVY) lie on the Cytoplasmic side of the membrane.

In terms of tissue distribution, expressed predominantly in epithelium of uterus and oviduct.

It localises to the zymogen granule membrane. In terms of biological role, localized to zymogen granules, where it functions in trypsinogen activation. May indirectly regulate cell motility, cell-cell and cell/extracellular matrix interactions. This Rattus norvegicus (Rat) protein is CUB and zona pellucida-like domain-containing protein 1.